The sequence spans 618 residues: uncharacterized protein (618 aa).

Disordered regions lie at residues 70-118, 330-352, 456-552, and 587-618; these read SSEY…SLPR, LTAR…EVPC, TLPV…PILT, and IPSD…LKTL. Composition is skewed to basic and acidic residues over residues 74-84 and 333-343; these read KGTRRDSRGYE and RTEEEPERHVP. Positions 463–481 are enriched in low complexity; sequence TSRPQSPSSLSSKTTGLPL. Polar residues-rich tracts occupy residues 485-516 and 609-618; these read KPTS…NSLM and SDPSHSLKTL.

This is an uncharacterized protein from Danio rerio (Zebrafish).